Here is a 227-residue protein sequence, read N- to C-terminus: Cytochrome c oxidase subunit 2 (227 aa).

Over 1-14 (MAYPFQLGLQDASS) the chain is Mitochondrial intermembrane. The helical transmembrane segment at 15–45 (PIMEELTNFHDHTLMIVFLISSLVLYIISSM) threads the bilayer. Residues 46–59 (LTTKMTHTSTMDAQ) lie on the Mitochondrial matrix side of the membrane. A helical membrane pass occupies residues 60 to 87 (EVETIWTVLPAVILILIALPSLRILYMM). Residues 88–227 (DEINNPVLTV…HFENWSTSMI (140 aa)) lie on the Mitochondrial intermembrane side of the membrane. 6 residues coordinate Cu cation: histidine 161, cysteine 196, glutamate 198, cysteine 200, histidine 204, and methionine 207. Glutamate 198 contributes to the Mg(2+) binding site.

The protein belongs to the cytochrome c oxidase subunit 2 family. As to quaternary structure, component of the cytochrome c oxidase (complex IV, CIV), a multisubunit enzyme composed of 14 subunits. The complex is composed of a catalytic core of 3 subunits MT-CO1, MT-CO2 and MT-CO3, encoded in the mitochondrial DNA, and 11 supernumerary subunits COX4I, COX5A, COX5B, COX6A, COX6B, COX6C, COX7A, COX7B, COX7C, COX8 and NDUFA4, which are encoded in the nuclear genome. The complex exists as a monomer or a dimer and forms supercomplexes (SCs) in the inner mitochondrial membrane with NADH-ubiquinone oxidoreductase (complex I, CI) and ubiquinol-cytochrome c oxidoreductase (cytochrome b-c1 complex, complex III, CIII), resulting in different assemblies (supercomplex SCI(1)III(2)IV(1) and megacomplex MCI(2)III(2)IV(2)). Found in a complex with TMEM177, COA6, COX18, COX20, SCO1 and SCO2. Interacts with TMEM177 in a COX20-dependent manner. Interacts with COX20. Interacts with COX16. It depends on Cu cation as a cofactor.

The protein resides in the mitochondrion inner membrane. It carries out the reaction 4 Fe(II)-[cytochrome c] + O2 + 8 H(+)(in) = 4 Fe(III)-[cytochrome c] + 2 H2O + 4 H(+)(out). Its function is as follows. Component of the cytochrome c oxidase, the last enzyme in the mitochondrial electron transport chain which drives oxidative phosphorylation. The respiratory chain contains 3 multisubunit complexes succinate dehydrogenase (complex II, CII), ubiquinol-cytochrome c oxidoreductase (cytochrome b-c1 complex, complex III, CIII) and cytochrome c oxidase (complex IV, CIV), that cooperate to transfer electrons derived from NADH and succinate to molecular oxygen, creating an electrochemical gradient over the inner membrane that drives transmembrane transport and the ATP synthase. Cytochrome c oxidase is the component of the respiratory chain that catalyzes the reduction of oxygen to water. Electrons originating from reduced cytochrome c in the intermembrane space (IMS) are transferred via the dinuclear copper A center (CU(A)) of subunit 2 and heme A of subunit 1 to the active site in subunit 1, a binuclear center (BNC) formed by heme A3 and copper B (CU(B)). The BNC reduces molecular oxygen to 2 water molecules using 4 electrons from cytochrome c in the IMS and 4 protons from the mitochondrial matrix. This is Cytochrome c oxidase subunit 2 (MT-CO2) from Lophuromys flavopunctatus (Yellow-spotted brush-furred rat).